We begin with the raw amino-acid sequence, 174 residues long: ATP-dependent protease subunit HslV (174 aa).

The active site involves threonine 4. Positions 159, 162, and 165 each coordinate Na(+).

It belongs to the peptidase T1B family. HslV subfamily. As to quaternary structure, a double ring-shaped homohexamer of HslV is capped on each side by a ring-shaped HslU homohexamer. The assembly of the HslU/HslV complex is dependent on binding of ATP.

Its subcellular location is the cytoplasm. It carries out the reaction ATP-dependent cleavage of peptide bonds with broad specificity.. Allosterically activated by HslU binding. Functionally, protease subunit of a proteasome-like degradation complex believed to be a general protein degrading machinery. The sequence is that of ATP-dependent protease subunit HslV from Moorella thermoacetica (strain ATCC 39073 / JCM 9320).